The chain runs to 145 residues: uncharacterized protein (145 aa).

A disordered region spans residues 1–25; the sequence is MSENNENDGFNLDPDVKEELEETKS. The segment covering 14 to 25 has biased composition (basic and acidic residues); that stretch reads PDVKEELEETKS.

This is an uncharacterized protein from His1 virus (isolate Australia/Victoria) (His1V).